The following is a 570-amino-acid chain: Nucleoprotein (570 aa).

The interval 54–236 (LRKTKRTDDD…ITKEESSINI (183 aa)) is binding site for the cap structure m7GTP. Positions 332–356 (DLTKKPDAVPEPGAAPRPAERKGQN) are disordered. Mg(2+) is bound by residues D386 and E388. Residues D386 and E388 each contribute to the Mn(2+) site. Zn(2+) contacts are provided by E396, C503, H506, and C531. D535 contacts Mg(2+). D535 contributes to the Mn(2+) binding site.

It belongs to the arenaviridae nucleocapsid protein family. In terms of assembly, homomultimerizes to form the nucleocapsid. Binds to viral genomic RNA. Interacts with glycoprotein G2. Interacts with protein Z; this interaction probably directs the encapsidated genome to budding sites. Interacts with protein L; this interaction does not interfere with Z-L interaction. Interacts with host IKBKE (via Protein kinase domain); the interaction inhibits IKBKE kinase activity.

It localises to the virion. Its subcellular location is the host cytoplasm. Functionally, encapsidates the genome, protecting it from nucleases. The encapsidated genomic RNA is termed the nucleocapsid (NC). Serves as template for viral transcription and replication. The increased presence of protein N in host cell does not seem to trigger the switch from transcription to replication as observed in other negative strain RNA viruses. Through the interaction with host IKBKE, strongly inhibits the phosphorylation and nuclear translocation of host IRF3, a protein involved in interferon activation pathway, leading to the inhibition of interferon-beta and IRF3-dependent promoters activation. Also encodes a functional 3'-5' exoribonuclease that degrades preferentially dsRNA substrates and thereby participates in the suppression of interferon induction. This Artibeus (neotropical fruit bats) protein is Nucleoprotein.